Consider the following 317-residue polypeptide: Tenomodulin (317 aa).

At 1–30 (MAKNPPENCEGCHILNAEALKSKKIRKSLK) the chain is on the cytoplasmic side. Residues 31–50 (ICGLVFGILALTLIVLFWGS) traverse the membrane as a helical; Signal-anchor for type II membrane protein segment. Over 51-317 (KHFWPEVSKK…WWVARMLGRV (267 aa)) the chain is Extracellular. One can recognise a BRICHOS domain in the interval 93–186 (GNGTDETLEV…ICDNVTMYWI (94 aa)). The N-linked (GlcNAc...) asparagine glycan is linked to Asn94. Cysteines 120 and 178 form a disulfide. Asn180 carries an N-linked (GlcNAc...) asparagine glycan. Ser239 carries the post-translational modification Phosphoserine.

It belongs to the chondromodulin-1 family. As to expression, highly expressed in tendons.

It is found in the membrane. The protein localises to the nucleus envelope. In terms of biological role, may be an angiogenesis inhibitor. In Rattus norvegicus (Rat), this protein is Tenomodulin (Tnmd).